The primary structure comprises 127 residues: Fluoride-specific ion channel FluC (127 aa).

Helical transmembrane passes span 4–24, 34–54, 65–85, and 97–117; these read IIYI…TQIA, FPFP…IGFF, FELR…FSTL, and FYGI…LAVL. 2 residues coordinate Na(+): glycine 77 and threonine 80.

It belongs to the fluoride channel Fluc/FEX (TC 1.A.43) family.

The protein resides in the cell inner membrane. The catalysed reaction is fluoride(in) = fluoride(out). Its activity is regulated as follows. Na(+) is not transported, but it plays an essential structural role and its presence is essential for fluoride channel function. Fluoride-specific ion channel. Important for reducing fluoride concentration in the cell, thus reducing its toxicity. The polypeptide is Fluoride-specific ion channel FluC (Bacteroides fragilis (strain ATCC 25285 / DSM 2151 / CCUG 4856 / JCM 11019 / LMG 10263 / NCTC 9343 / Onslow / VPI 2553 / EN-2)).